A 736-amino-acid chain; its full sequence is Na(+)/H(+) antiporter NhaA (736 aa).

Positions 1–387 (MNHSPQSARP…ICGYLLLRAA (387 aa)) are na(+)/H(+) antiporter NhaA. 12 helical membrane-spanning segments follow: residues 23–43 (AGGI…NSPF), 58–78 (LSLA…LVGL), 96–116 (MLPG…FAVL), 126–146 (GWAV…SLLG), 155–175 (VFLA…IAIF), 178–198 (AEIS…LFVM), 201–221 (MGVV…FFVF), 224–244 (GVHA…KPAP), 265–285 (VAFI…FKGL), 298–318 (ILLG…WLAI), 334–354 (LYGV…IGLL), and 367–387 (IGVL…LRAA). Residues 388-736 (RPDQSAANPL…EKAIWARYGL (349 aa)) are peptidase S49.

It in the N-terminal section; belongs to the NhaA Na(+)/H(+) (TC 2.A.33) antiporter family. The protein in the C-terminal section; belongs to the peptidase S49 family.

The protein localises to the cell inner membrane. The enzyme catalyses Na(+)(in) + 2 H(+)(out) = Na(+)(out) + 2 H(+)(in). Na(+)/H(+) antiporter that extrudes sodium in exchange for external protons. This is Na(+)/H(+) antiporter NhaA from Brucella abortus (strain 2308).